A 218-amino-acid chain; its full sequence is Suppressor of silencing P0 (218 aa).

The 5-residue stretch at 63-67 (LPLHL) folds into the F-box-like domain.

This sequence belongs to the polerovirus P0 protein family. Interacts (via F-box-like domain) with host AGO1; this interaction targets AGO1 for degradation, and thereby suppresses the silencing function of the latter. Interacts (via F-box-like domain) with host ASK1 and ASK2 (SKP proteins); these interactions are essential for viral pathogenicity. Part of a SCF P0 complex composed of P0 and the host proteins SKP and CUL1.

Functionally, suppressor of RNA-mediated gene silencing, also known as post-transcriptional gene silencing (PTGS), a mechanism of plant viral defense that limits the accumulation of viral RNAs. The P0 protein suppresses local PTGS using its F-box-like domain to mediate destabilization and degradation of the AGO1 protein. The polypeptide is Suppressor of silencing P0 (Beet western yellows virus (isolate GB1) (BWYV)).